Here is a 294-residue protein sequence, read N- to C-terminus: MKRLSSSDSMCGLISTSTDEQSPRGYGSNYQSMLEGYDEDATLIEEYSGNHHHMGLSEKKRRLKVDQVKALEKNFELENKLEPERKTKLAQELGLQPRQVAVWFQNRRARWKTKQLEKDYGVLKGQYDSLRHNFDSLRRDNDSLLQEISKIKAKVNGEEDNNNNKAITEGVKEEEVHKTDSIPSSPLQFLEHSSGFNYRRSFTDLRDLLPNSTVVEAGSSDSCDSSAVLNDETSSDNGRLTPPVTVTGGSFLQFVKTEQTEDHEDFLSGEEACGFFSDEQPPSLHWYSASDHWT.

The segment covering 1-20 has biased composition (polar residues); the sequence is MKRLSSSDSMCGLISTSTDE. The tract at residues 1–31 is disordered; that stretch reads MKRLSSSDSMCGLISTSTDEQSPRGYGSNYQ. The homeobox DNA-binding region spans 56–115; the sequence is LSEKKRRLKVDQVKALEKNFELENKLEPERKTKLAQELGLQPRQVAVWFQNRRARWKTKQ. A leucine-zipper region spans residues 116-151; it reads LEKDYGVLKGQYDSLRHNFDSLRRDNDSLLQEISKI. Residues 219-238 are compositionally biased toward polar residues; the sequence is SSDSCDSSAVLNDETSSDNG. The tract at residues 219 to 241 is disordered; sequence SSDSCDSSAVLNDETSSDNGRLT.

Belongs to the HD-ZIP homeobox family. Class I subfamily. Widely expressed with a lower level in siliques.

It is found in the nucleus. In terms of biological role, probable transcription factor that may function as a negative regulator of the flowering time response to photoperiod. May act to repress cell expansion during plant development. This is Homeobox-leucine zipper protein ATHB-16 (ATHB-16) from Arabidopsis thaliana (Mouse-ear cress).